Consider the following 370-residue polypeptide: Pyruvate dehydrogenase E1 component subunit alpha (370 aa).

As to quaternary structure, heterodimer of an alpha and a beta chain. It depends on thiamine diphosphate as a cofactor.

The catalysed reaction is N(6)-[(R)-lipoyl]-L-lysyl-[protein] + pyruvate + H(+) = N(6)-[(R)-S(8)-acetyldihydrolipoyl]-L-lysyl-[protein] + CO2. Functionally, the pyruvate dehydrogenase complex catalyzes the overall conversion of pyruvate to acetyl-CoA and CO(2). It contains multiple copies of three enzymatic components: pyruvate dehydrogenase (E1), dihydrolipoamide acetyltransferase (E2) and lipoamide dehydrogenase (E3). The chain is Pyruvate dehydrogenase E1 component subunit alpha (pdhA) from Staphylococcus epidermidis (strain ATCC 35984 / DSM 28319 / BCRC 17069 / CCUG 31568 / BM 3577 / RP62A).